We begin with the raw amino-acid sequence, 313 residues long: Serine/threonine-protein kinase SZE1 (313 aa).

A lipid anchor (N-myristoyl glycine) is attached at glycine 2. Residues methionine 43–alanine 311 enclose the Protein kinase domain. ATP is bound by residues leucine 49 to leucine 57 and lysine 71.

It belongs to the protein kinase superfamily. Ser/Thr protein kinase family. In terms of assembly, component of an immune signaling complex made of, at least, SZE1, BKN2/SZE2, ZAR1 and ZED1. Interacts directly with ZED1, ZAR1 and Pseudomonas syringae HOPZ1A at the plasma membrane. In terms of processing, N-terminal myristoylation is critical for plasma membrane localization and implication in defense responses. Post-translationally, autophosphorylated. In terms of tissue distribution, expressed in roots, seedlings, rosette leaves, floral organs, siliques and inflorescence stems.

The protein localises to the cell membrane. The enzyme catalyses L-seryl-[protein] + ATP = O-phospho-L-seryl-[protein] + ADP + H(+). It catalyses the reaction L-threonyl-[protein] + ATP = O-phospho-L-threonyl-[protein] + ADP + H(+). In terms of biological role, together with BKN2/SZE2 and ZED1, required for effector-triggered immunity (e.g. Pseudomonas syringae effector type III HopZ1a) via the activation of ZAR1, thus being essential for resistance against P.syringae pv. tomato DC3000 expressing HopZ1a. The polypeptide is Serine/threonine-protein kinase SZE1 (Arabidopsis thaliana (Mouse-ear cress)).